Reading from the N-terminus, the 778-residue chain is Hyperosmolality-gated Ca2+ permeable channel 1.4 (778 aa).

10 helical membrane-spanning segments follow: residues Ile7–Ile27, Ile101–Val121, Phe158–Lys178, Phe375–Val395, Phe427–Met447, Tyr467–Glu487, Ala512–Phe532, Pro584–Phe604, Val626–Ser646, and Val651–Cys671. Residues Val738–Thr778 are disordered. Low complexity predominate over residues Ser753–Ser763.

This sequence belongs to the CSC1 (TC 1.A.17) family.

The protein localises to the membrane. Functionally, acts as an osmosensitive calcium-permeable cation channel. This Arabidopsis thaliana (Mouse-ear cress) protein is Hyperosmolality-gated Ca2+ permeable channel 1.4.